Here is a 203-residue protein sequence, read N- to C-terminus: A-type ATP synthase subunit E (203 aa).

The protein belongs to the V-ATPase E subunit family. Has multiple subunits with at least A(3), B(3), C, D, E, F, H, I and proteolipid K(x).

The protein localises to the cell membrane. Component of the A-type ATP synthase that produces ATP from ADP in the presence of a proton gradient across the membrane. The chain is A-type ATP synthase subunit E from Thermococcus onnurineus (strain NA1).